Reading from the N-terminus, the 141-residue chain is Arsenate reductase (141 aa).

Catalysis depends on Cys12, which acts as the Nucleophile; cysteine thioarsenate intermediate.

The protein belongs to the ArsC family. In terms of assembly, monomer in solution.

The enzyme catalyses [glutaredoxin]-dithiol + arsenate + glutathione + H(+) = glutathionyl-S-S-[glutaredoxin] + arsenite + H2O. Inhibited by the thiol reagents iodoacetate (IAA) and N-ethylmaleimide (NEM). Activity is rapidly inactivated by the histidine-modifying reagent diethylpyrocarbonate (DEPC). Functionally, involved in resistance to arsenate. Catalyzes the reduction of arsenate [As(V)] to arsenite [As(III)]. The resulting arsenite is then extruded from the cell via the ArsAB transport system. The sequence is that of Arsenate reductase from Escherichia coli.